A 294-amino-acid chain; its full sequence is Bifunctional protein FolD (294 aa).

Residues 166-168 (GRS), serine 191, and isoleucine 232 contribute to the NADP(+) site.

Belongs to the tetrahydrofolate dehydrogenase/cyclohydrolase family. As to quaternary structure, homodimer.

The catalysed reaction is (6R)-5,10-methylene-5,6,7,8-tetrahydrofolate + NADP(+) = (6R)-5,10-methenyltetrahydrofolate + NADPH. It catalyses the reaction (6R)-5,10-methenyltetrahydrofolate + H2O = (6R)-10-formyltetrahydrofolate + H(+). The protein operates within one-carbon metabolism; tetrahydrofolate interconversion. Functionally, catalyzes the oxidation of 5,10-methylenetetrahydrofolate to 5,10-methenyltetrahydrofolate and then the hydrolysis of 5,10-methenyltetrahydrofolate to 10-formyltetrahydrofolate. The sequence is that of Bifunctional protein FolD from Afipia carboxidovorans (strain ATCC 49405 / DSM 1227 / KCTC 32145 / OM5) (Oligotropha carboxidovorans).